The following is a 502-amino-acid chain: ATP synthase subunit alpha (502 aa).

An ATP-binding site is contributed by 169 to 176 (GDRQTGKT).

This sequence belongs to the ATPase alpha/beta chains family. In terms of assembly, F-type ATPases have 2 components, CF(1) - the catalytic core - and CF(0) - the membrane proton channel. CF(1) has five subunits: alpha(3), beta(3), gamma(1), delta(1), epsilon(1). CF(0) has three main subunits: a(1), b(2) and c(9-12). The alpha and beta chains form an alternating ring which encloses part of the gamma chain. CF(1) is attached to CF(0) by a central stalk formed by the gamma and epsilon chains, while a peripheral stalk is formed by the delta and b chains.

Its subcellular location is the cell inner membrane. It carries out the reaction ATP + H2O + 4 H(+)(in) = ADP + phosphate + 5 H(+)(out). Produces ATP from ADP in the presence of a proton gradient across the membrane. The alpha chain is a regulatory subunit. The polypeptide is ATP synthase subunit alpha (Pelobacter propionicus (strain DSM 2379 / NBRC 103807 / OttBd1)).